A 420-amino-acid polypeptide reads, in one-letter code: Interleukin-5 receptor subunit alpha (420 aa).

An N-terminal signal peptide occupies residues 1–20 (MIIVAHVLLILLGATEILQA). Residues 21 to 342 (DLLPDEKISL…NDEHKPLREW (322 aa)) lie on the Extracellular side of the membrane. The Fibronectin type-III 1 domain maps to 32–123 (PPVNFTIKVT…ASAELHAPPG (92 aa)). 2 N-linked (GlcNAc...) asparagine glycosylation sites follow: Asn35 and Asn131. 2 disulfides stabilise this stretch: Cys134–Cys155 and Cys182–Cys196. Residues Asn216 and Asn244 are each glycosylated (N-linked (GlcNAc...) asparagine). The region spanning 241–334 (PPLNVTAEIE…WSQPIYVGND (94 aa)) is the Fibronectin type-III 2 domain. The cysteines at positions 269 and 316 are disulfide-linked. The WSXWS motif motif lies at 322-326 (WSEWS). Residues 343 to 362 (FVIVIMATICFILLILSLIC) form a helical membrane-spanning segment. Topologically, residues 363 to 420 (KICHLWIKLFPPIPAPKSNIKDLFVTTNYEKAGSSETEIEVICYIEKPGVETLEDSVF) are cytoplasmic. The Box 1 motif motif lies at 371–379 (LFPPIPAPK).

Belongs to the type I cytokine receptor family. Type 5 subfamily. Interacts with IL5. Interacts with CSF2RB. Interacts with JAK2. Interacts with SDCBP. Expressed on eosinophils and basophils.

Its subcellular location is the membrane. Its function is as follows. Cell surface receptor that plays an important role in the survival, differentiation, and chemotaxis of eosinophils. Acts by forming a heterodimeric receptor with CSF2RB subunit and subsequently binding to interleukin-5. In unstimulated conditions, interacts constitutively with JAK2. Heterodimeric receptor activation leads to JAK2 stimulation and subsequent activation of the JAK-STAT pathway. The chain is Interleukin-5 receptor subunit alpha (IL5RA) from Homo sapiens (Human).